A 103-amino-acid polypeptide reads, in one-letter code: Histone H4.1 (103 aa).

Positions 1–14 (MSGRGKGGKGLGKG) are enriched in gly residues. The segment at 1–20 (MSGRGKGGKGLGKGGAKRHR) is disordered. An N6-acetyl-N6-methyllysine; alternate modification is found at Lys6. N6-methyllysine; alternate is present on residues Lys6, Lys9, and Lys13. Lys13 is modified (N6-acetyl-N6-methyllysine; alternate). Residues 17 to 21 (KRHRK) mediate DNA binding. An N6-glutaryllysine modification is found at Lys92.

It belongs to the histone H4 family. As to quaternary structure, the nucleosome is a histone octamer containing two molecules each of H2A, H2B, H3 and H4 assembled in one H3-H4 heterotetramer and two H2A-H2B heterodimers. The octamer wraps approximately 147 bp of DNA. In terms of processing, glutarylation at Lys-92 (H4K91glu) destabilizes nucleosomes by promoting dissociation of the H2A-H2B dimers from nucleosomes.

It is found in the nucleus. Its subcellular location is the chromosome. Functionally, core component of nucleosome. Nucleosomes wrap and compact DNA into chromatin, limiting DNA accessibility to the cellular machineries which require DNA as a template. Histones thereby play a central role in transcription regulation, DNA repair, DNA replication and chromosomal stability. DNA accessibility is regulated via a complex set of post-translational modifications of histones, also called histone code, and nucleosome remodeling. This chain is Histone H4.1 (HHF1), found in Eremothecium gossypii (strain ATCC 10895 / CBS 109.51 / FGSC 9923 / NRRL Y-1056) (Yeast).